The following is a 278-amino-acid chain: Small ribosomal subunit protein uS3 (278 aa).

One can recognise a KH type-2 domain in the interval 38-106 (IRKLLSKGME…QVQLNILEVK (69 aa)). The interval 213 to 278 (RQAQAAARAG…APAPAENQEG (66 aa)) is disordered. A compositionally biased stretch (low complexity) spans 214–223 (QAQAAARAGV). Residues 232–253 (RGGERPSRGSRGDRPTRADRGG) show a composition bias toward basic and acidic residues. Residues 259–278 (EATGAATEQAAPAPAENQEG) show a composition bias toward low complexity.

This sequence belongs to the universal ribosomal protein uS3 family. As to quaternary structure, part of the 30S ribosomal subunit. Forms a tight complex with proteins S10 and S14.

In terms of biological role, binds the lower part of the 30S subunit head. Binds mRNA in the 70S ribosome, positioning it for translation. The protein is Small ribosomal subunit protein uS3 of Nocardioides sp. (strain ATCC BAA-499 / JS614).